Consider the following 339-residue polypeptide: DNA-directed RNA polymerase subunit alpha (339 aa).

The tract at residues 1 to 233 (MVREEVAGST…DLFLPFLHAE (233 aa)) is alpha N-terminal domain (alpha-NTD). Residues 266–339 (GIPLNCIFID…IDLLKNKLSF (74 aa)) are alpha C-terminal domain (alpha-CTD).

It belongs to the RNA polymerase alpha chain family. In terms of assembly, in plastids the minimal PEP RNA polymerase catalytic core is composed of four subunits: alpha, beta, beta', and beta''. When a (nuclear-encoded) sigma factor is associated with the core the holoenzyme is formed, which can initiate transcription.

It is found in the plastid. It localises to the chloroplast. It catalyses the reaction RNA(n) + a ribonucleoside 5'-triphosphate = RNA(n+1) + diphosphate. DNA-dependent RNA polymerase catalyzes the transcription of DNA into RNA using the four ribonucleoside triphosphates as substrates. In Aegilops speltoides (Goatgrass), this protein is DNA-directed RNA polymerase subunit alpha.